Consider the following 258-residue polypeptide: Snake venom serine proteinase 8 (258 aa).

A signal peptide spans 1–18 (MVLIRVLANLLILQLSYA). A propeptide spanning residues 19 to 24 (QKSSEL) is cleaved from the precursor. A Peptidase S1 domain is found at 25-249 (VIGGDECNIN…YNDWIQSIIA (225 aa)). Intrachain disulfides connect cysteine 31–cysteine 163, cysteine 50–cysteine 66, cysteine 98–cysteine 256, cysteine 142–cysteine 210, cysteine 174–cysteine 189, and cysteine 200–cysteine 225. Asparagine 44 carries an N-linked (GlcNAc...) asparagine glycan. Residues histidine 65 and aspartate 110 each act as charge relay system in the active site. Serine 204 (charge relay system) is an active-site residue.

It belongs to the peptidase S1 family. Snake venom subfamily. As to quaternary structure, monomer. Expressed by the venom gland.

It localises to the secreted. Its function is as follows. Snake venom serine protease that may act in the hemostasis system of the prey. In Crotalus adamanteus (Eastern diamondback rattlesnake), this protein is Snake venom serine proteinase 8.